Here is a 732-residue protein sequence, read N- to C-terminus: uncharacterized protein (732 aa).

The next 2 helical transmembrane spans lie at 687-707 (YLFP…GSDL) and 712-732 (GVKV…YYTS).

The protein belongs to the FadG family.

Its subcellular location is the cell membrane. This is an uncharacterized protein from Bacillus subtilis (strain 168).